The sequence spans 129 residues: Cytochrome c oxidase subunit 5B, mitochondrial (129 aa).

The transit peptide at 1-31 (MASRLLRGVGALASQALRARGPNGVSVVRSM) directs the protein to the mitochondrion. N6-acetyllysine occurs at positions 68 and 86. Zn(2+) is bound by residues C91, C93, C113, and C116. N6-acetyllysine is present on K121.

It belongs to the cytochrome c oxidase subunit 5B family. Component of the cytochrome c oxidase (complex IV, CIV), a multisubunit enzyme composed of 14 subunits. The complex is composed of a catalytic core of 3 subunits MT-CO1, MT-CO2 and MT-CO3, encoded in the mitochondrial DNA, and 11 supernumerary subunits COX4I1 (or COX4I2), COX5A, COX5B, COX6A2 (or COX6A1), COX6B1 (or COX6B2), COX6C, COX7A1 (or COX7A2), COX7B, COX7C, COX8B and NDUFA4, which are encoded in the nuclear genome. The complex exists as a monomer or a dimer and forms supercomplexes (SCs) in the inner mitochondrial membrane with NADH-ubiquinone oxidoreductase (complex I, CI) and ubiquinol-cytochrome c oxidoreductase (cytochrome b-c1 complex, complex III, CIII), resulting in different assemblies (supercomplex SCI(1)III(2)IV(1) and megacomplex MCI(2)III(2)IV(2)).

The protein localises to the mitochondrion inner membrane. It participates in energy metabolism; oxidative phosphorylation. In terms of biological role, component of the cytochrome c oxidase, the last enzyme in the mitochondrial electron transport chain which drives oxidative phosphorylation. The respiratory chain contains 3 multisubunit complexes succinate dehydrogenase (complex II, CII), ubiquinol-cytochrome c oxidoreductase (cytochrome b-c1 complex, complex III, CIII) and cytochrome c oxidase (complex IV, CIV), that cooperate to transfer electrons derived from NADH and succinate to molecular oxygen, creating an electrochemical gradient over the inner membrane that drives transmembrane transport and the ATP synthase. Cytochrome c oxidase is the component of the respiratory chain that catalyzes the reduction of oxygen to water. Electrons originating from reduced cytochrome c in the intermembrane space (IMS) are transferred via the dinuclear copper A center (CU(A)) of subunit 2 and heme A of subunit 1 to the active site in subunit 1, a binuclear center (BNC) formed by heme A3 and copper B (CU(B)). The BNC reduces molecular oxygen to 2 water molecules using 4 electrons from cytochrome c in the IMS and 4 protons from the mitochondrial matrix. This Bos taurus (Bovine) protein is Cytochrome c oxidase subunit 5B, mitochondrial (COX5B).